We begin with the raw amino-acid sequence, 195 residues long: GTP-dependent dephospho-CoA kinase (195 aa).

Residues Asp-49, Val-50, Asp-68, Glu-127, and Asp-150 each coordinate GTP.

This sequence belongs to the GTP-dependent DPCK family.

It catalyses the reaction 3'-dephospho-CoA + GTP = GDP + CoA + H(+). It participates in cofactor biosynthesis; coenzyme A biosynthesis. Its function is as follows. Catalyzes the GTP-dependent phosphorylation of the 3'-hydroxyl group of dephosphocoenzyme A to form coenzyme A (CoA). The sequence is that of GTP-dependent dephospho-CoA kinase from Methanosarcina mazei (strain ATCC BAA-159 / DSM 3647 / Goe1 / Go1 / JCM 11833 / OCM 88) (Methanosarcina frisia).